Consider the following 285-residue polypeptide: tRNA uridine(34) hydroxylase (285 aa).

The Rhodanese domain maps to 130–225; the sequence is RGDDVVFFDG…YGEAFGDTGL (96 aa). Catalysis depends on cysteine 185, which acts as the Cysteine persulfide intermediate.

The protein belongs to the TrhO family.

The catalysed reaction is uridine(34) in tRNA + AH2 + O2 = 5-hydroxyuridine(34) in tRNA + A + H2O. Its function is as follows. Catalyzes oxygen-dependent 5-hydroxyuridine (ho5U) modification at position 34 in tRNAs. In Rhodococcus jostii (strain RHA1), this protein is tRNA uridine(34) hydroxylase.